A 117-amino-acid polypeptide reads, in one-letter code: Large ribosomal subunit protein bL20c (117 aa).

The protein belongs to the bacterial ribosomal protein bL20 family.

It localises to the plastid. The protein localises to the chloroplast. Binds directly to 23S ribosomal RNA and is necessary for the in vitro assembly process of the 50S ribosomal subunit. It is not involved in the protein synthesizing functions of that subunit. The protein is Large ribosomal subunit protein bL20c of Gossypium hirsutum (Upland cotton).